Reading from the N-terminus, the 196-residue chain is Thymidylate kinase (196 aa).

Residue 7 to 14 (GIDGSGKT) participates in ATP binding.

This sequence belongs to the thymidylate kinase family.

It catalyses the reaction dTMP + ATP = dTDP + ADP. Phosphorylation of dTMP to form dTDP in both de novo and salvage pathways of dTTP synthesis. This Wolbachia pipientis wMel protein is Thymidylate kinase.